Reading from the N-terminus, the 80-residue chain is UPF0512 protein Q (80 aa).

The protein belongs to the UPF0512 family.

The sequence is that of UPF0512 protein Q from Dictyostelium discoideum (Social amoeba).